The following is a 107-amino-acid chain: Metallothionein-1 (107 aa).

The propeptide occupies 1-2 (MD).

The protein belongs to the metallothionein superfamily. Type 7 family.

The metallothioneins are involved in the cellular sequestration of toxic metal ions. Binds 12 cadmium ions per molecule. This Tetrahymena pyriformis protein is Metallothionein-1.